The chain runs to 172 residues: Large ribosomal subunit protein uL10 (172 aa).

It belongs to the universal ribosomal protein uL10 family. As to quaternary structure, part of the ribosomal stalk of the 50S ribosomal subunit. The N-terminus interacts with L11 and the large rRNA to form the base of the stalk. The C-terminus forms an elongated spine to which L12 dimers bind in a sequential fashion forming a multimeric L10(L12)X complex.

Its function is as follows. Forms part of the ribosomal stalk, playing a central role in the interaction of the ribosome with GTP-bound translation factors. In Rhizobium etli (strain ATCC 51251 / DSM 11541 / JCM 21823 / NBRC 15573 / CFN 42), this protein is Large ribosomal subunit protein uL10.